The following is a 70-amino-acid chain: Large ribosomal subunit protein bL31 (70 aa).

Zn(2+) is bound by residues cysteine 16, cysteine 18, cysteine 37, and cysteine 40.

It belongs to the bacterial ribosomal protein bL31 family. Type A subfamily. Part of the 50S ribosomal subunit. It depends on Zn(2+) as a cofactor.

Functionally, binds the 23S rRNA. The chain is Large ribosomal subunit protein bL31 from Erwinia tasmaniensis (strain DSM 17950 / CFBP 7177 / CIP 109463 / NCPPB 4357 / Et1/99).